The sequence spans 698 residues: Polyribonucleotide nucleotidyltransferase (698 aa).

Mg(2+) is bound by residues aspartate 490 and aspartate 496. Residues 557-616 (PKVVTMTIKPDKIRDVIGPGGKKINEIIDETGVKLDIEQDGTIFIGAVDQAMINRAREII) form the KH domain. An S1 motif domain is found at 626–694 (GQTYQATVKR…KQGRVNASHR (69 aa)).

It belongs to the polyribonucleotide nucleotidyltransferase family. Requires Mg(2+) as cofactor.

It localises to the cytoplasm. It carries out the reaction RNA(n+1) + phosphate = RNA(n) + a ribonucleoside 5'-diphosphate. Its function is as follows. Involved in mRNA degradation. Catalyzes the phosphorolysis of single-stranded polyribonucleotides processively in the 3'- to 5'-direction. This chain is Polyribonucleotide nucleotidyltransferase, found in Staphylococcus aureus (strain MSSA476).